Here is a 726-residue protein sequence, read N- to C-terminus: Bromodomain-containing protein 3 (726 aa).

The interval 1 to 35 is disordered; it reads MSTATTVAPAGIPATPGPVNPPPPEVSNPSKPGRK. The residue at position 2 (Ser2) is an N-acetylserine. The segment covering 15-26 has biased composition (pro residues); it reads TPGPVNPPPPEV. In terms of domain architecture, Bromo 1 spans 34–140; the sequence is RKTNQLQYMQ…KIFLQKVAQM (107 aa). The interval 78-80 is acetylated histone H3 binding; sequence KNP. Disordered stretches follow at residues 149-169 and 237-305; these read PPAP…AGTQ and VKKK…AGKK. Residues 248-261 show a composition bias toward low complexity; the sequence is TTTPTTSAITASRS. Ser263 and Ser281 each carry phosphoserine. Residues 306 to 415 enclose the Bromo 2 domain; sequence GKLSEHLRYC…DVFEMRFAKM (110 aa). Lys414 is covalently cross-linked (Glycyl lysine isopeptide (Lys-Gly) (interchain with G-Cter in SUMO2)). Disordered stretches follow at residues 421–462, 477–575, and 637–726; these read EAPA…RATR, LAAL…MSYD, and LQKK…SDSE. Residues 453 to 524 are a coiled coil; that stretch reads SDSEEERATR…AEEEKKAKVA (72 aa). A compositionally biased stretch (basic residues) spans 487–503; it reads KPKKKKEKKEKEKKKKD. Over residues 504–521 the composition is skewed to basic and acidic residues; it reads KEKEKEKHKVKAEEEKKA. Positions 523-540 are enriched in low complexity; sequence VAPPAKQAQQKKAPAKKA. One can recognise an NET domain in the interval 562-644; that stretch reads DSEEEEEGLP…SCLQKKQRKP (83 aa). Ser563 carries the phosphoserine modification. The stretch at 645–684 forms a coiled coil; that stretch reads FSASGKKQAAKSKEELAQEKKKELEKRLQDVSGQLSSSKK. The span at 655-673 shows a compositional bias: basic and acidic residues; the sequence is KSKEELAQEKKKELEKRLQ. Residues 692–726 are compositionally biased toward low complexity; sequence GSAPSGGPSRLSSSSSSESGSSSSSGSSSDSSDSE.

It belongs to the BET family. Interacts (via bromo domain 1) with GATA1 acetylated at 'Lys-312' and 'Lys-315'. Interacts (via bromo domain 1) with GATA2 acetylated on lysine residues. Interacts (via NET domain) with CHD4 (via KIKL motif). Interacts (via NET domain) with SMARCA4 (via KIKL motif). Interacts (via NET domain) with NSD3 (via KIKL motif). In terms of assembly, (Microbial infection) Interacts with the Integrase protein of Moloney murine leukemia virus (MLV). In terms of tissue distribution, ubiquitous.

It localises to the nucleus. It is found in the chromosome. Its activity is regulated as follows. Inhibited by JQ1, a thieno-triazolo-1,4-diazepine derivative, which specifically inhibits members of the BET family (BRD2, BRD3 and BRD4). The first bromo domain is inhibited by GSK778 (iBET-BD1), which specifically inhibits the first bromo domain of members of the BET family (BRD2, BRD3 and BRD4). The second bromo domain is inhibited by ABBV-744, which specifically inhibits the second bromo domain of members of the BET family (BRD2, BRD3 and BRD4). The second bromo domain is inhibited by GSK046 (iBET-BD2), which specifically inhibits the second bromo domain of members of the BET family (BRD2, BRD3 and BRD4). Functionally, chromatin reader that recognizes and binds acetylated histones, thereby controlling gene expression and remodeling chromatin structures. Recruits transcription factors and coactivators to target gene sites, and activates RNA polymerase II machinery for transcriptional elongation. In vitro, binds acetylated lysine residues on the N-terminus of histone H2A, H2B, H3 and H4. Involved in endoderm differentiation via its association with long non-coding RNA (lncRNA) DIGIT: BRD3 undergoes liquid-liquid phase separation upon binding to lncRNA DIGIT, promoting binding to histone H3 acetylated at 'Lys-18' (H3K18ac) to induce endoderm gene expression. Also binds non-histones acetylated proteins, such as GATA1 and GATA2: regulates transcription by promoting the binding of the transcription factor GATA1 to its targets. This Homo sapiens (Human) protein is Bromodomain-containing protein 3.